A 462-amino-acid chain; its full sequence is 2-amino-5-chloromuconic acid deaminase (462 aa).

Residues lysine 79 and serine 156 each act as charge relay system in the active site. Catalysis depends on serine 180, which acts as the Acyl-ester intermediate.

This sequence belongs to the amidase family.

The catalysed reaction is (2Z,4E)-2-aminomuconate + H2O = (3E)-2-oxohex-3-enedioate + NH4(+). It participates in xenobiotic degradation; nitrobenzene degradation. The protein operates within xenobiotic degradation; 4-chloronitrobenzene degradation. Its function is as follows. Involved in the biodegradation of nitroaromatic and chlorinated nitroaromatic compounds. Catalyzes the conversion of 2-amino-5-chloromuconic acid into 2-hydroxy-5-chloromuconic acid and ammonia. Also able to catalyze the transformation of 2-aminomuconic acid into 2-hydroxymuconic acid. The polypeptide is 2-amino-5-chloromuconic acid deaminase (Comamonas testosteroni (Pseudomonas testosteroni)).